The following is a 201-amino-acid chain: Recombination protein RecR (201 aa).

The C4-type zinc-finger motif lies at 57–72; it reads CTHCRTFTEEESCAIC. One can recognise a Toprim domain in the interval 81–176; sequence GFLCVVEQPS…KVSRIAHGIP (96 aa).

The protein belongs to the RecR family.

Its function is as follows. May play a role in DNA repair. It seems to be involved in an RecBC-independent recombinational process of DNA repair. It may act with RecF and RecO. This chain is Recombination protein RecR, found in Histophilus somni (strain 129Pt) (Haemophilus somnus).